The following is a 320-amino-acid chain: MTAAVSTTDTPLNASPARGSIGISRKFKAYLALTKPRVIELLLVSTLPTMIFAQRGFPSIGLILATLVGGAFAAGSAGVFNCYIDRDIDKLMHRTEKRPLVTGEVTPREALVFAWILGAASIAILWFGANPLSAWLGLGAIVFYVVIYTMILKRRTAQNIVWGGAAGCFPVLIAWAAVTNTVEWPAIVLFMVIFLWTPPHYWPLSMRYGEDYRNAKVPMLGAIAGAKVVSVQVVLYAWAMVACSLLMVPVGGAGWVYTIAAVAAGAWFLYESHALYKRAQGGDVSNKGAMKVFHGSISYLTLLFIALAVDPFVGSAIVGS.

Helical transmembrane passes span 38-58 (VIEL…RGFP), 60-80 (IGLI…AGVF), 109-129 (EALV…WFGA), 132-152 (LSAW…TMIL), 159-179 (NIVW…AAVT), 184-204 (WPAI…YWPL), 222-242 (AIAG…AMVA), 254-276 (GWVY…HALY), and 299-319 (YLTL…AIVG).

It belongs to the UbiA prenyltransferase family. Protoheme IX farnesyltransferase subfamily.

It is found in the cell membrane. It catalyses the reaction heme b + (2E,6E)-farnesyl diphosphate + H2O = Fe(II)-heme o + diphosphate. It participates in porphyrin-containing compound metabolism; heme O biosynthesis; heme O from protoheme: step 1/1. Converts heme B (protoheme IX) to heme O by substitution of the vinyl group on carbon 2 of heme B porphyrin ring with a hydroxyethyl farnesyl side group. The sequence is that of Protoheme IX farnesyltransferase from Paenarthrobacter aurescens (strain TC1).